The chain runs to 474 residues: Methylenetetrahydrofolate--tRNA-(uracil-5-)-methyltransferase TrmFO (474 aa).

Position 9–14 (9–14) interacts with FAD; sequence GGGLAG.

This sequence belongs to the MnmG family. TrmFO subfamily. The cofactor is FAD.

Its subcellular location is the cytoplasm. It catalyses the reaction uridine(54) in tRNA + (6R)-5,10-methylene-5,6,7,8-tetrahydrofolate + NADH + H(+) = 5-methyluridine(54) in tRNA + (6S)-5,6,7,8-tetrahydrofolate + NAD(+). It carries out the reaction uridine(54) in tRNA + (6R)-5,10-methylene-5,6,7,8-tetrahydrofolate + NADPH + H(+) = 5-methyluridine(54) in tRNA + (6S)-5,6,7,8-tetrahydrofolate + NADP(+). Functionally, catalyzes the folate-dependent formation of 5-methyl-uridine at position 54 (M-5-U54) in all tRNAs. The polypeptide is Methylenetetrahydrofolate--tRNA-(uracil-5-)-methyltransferase TrmFO (Methylorubrum extorquens (strain PA1) (Methylobacterium extorquens)).